A 638-amino-acid chain; its full sequence is Leucine-rich repeat-containing protein 63 (638 aa).

Disordered stretches follow at residues V220–A241 and T306–R325. LRR repeat units follow at residues A389–L412, Q413–L435, Y437–L458, Y460–L481, R482–L504, and L532–S556.

In Mus musculus (Mouse), this protein is Leucine-rich repeat-containing protein 63.